Consider the following 85-residue polypeptide: MKRTNIYLDEEQTASLDKLAAQEGVSRAELIRLLLNRALTTAGDDLASDLQAINDSFGTLRHLDPPVRRSGGREQHLAQVWRATS.

Positions 64-76 (DPPVRRSGGREQH) are enriched in basic and acidic residues. Residues 64–85 (DPPVRRSGGREQHLAQVWRATS) are disordered.

This is an uncharacterized protein from Mycobacterium bovis (strain ATCC BAA-935 / AF2122/97).